The primary structure comprises 351 residues: DNA polymerase IV (351 aa).

Positions 4–185 (IIHVDMDCFF…LPLAKIPGVG (182 aa)) constitute a UmuC domain. Mg(2+) is bound by residues Asp8 and Asp103. Glu104 is a catalytic residue.

The protein belongs to the DNA polymerase type-Y family. Monomer. It depends on Mg(2+) as a cofactor.

The protein localises to the cytoplasm. It catalyses the reaction DNA(n) + a 2'-deoxyribonucleoside 5'-triphosphate = DNA(n+1) + diphosphate. Poorly processive, error-prone DNA polymerase involved in untargeted mutagenesis. Copies undamaged DNA at stalled replication forks, which arise in vivo from mismatched or misaligned primer ends. These misaligned primers can be extended by PolIV. Exhibits no 3'-5' exonuclease (proofreading) activity. May be involved in translesional synthesis, in conjunction with the beta clamp from PolIII. This chain is DNA polymerase IV, found in Escherichia coli O139:H28 (strain E24377A / ETEC).